We begin with the raw amino-acid sequence, 32 residues long: Glutathione S-transferase 8.2 (32 aa).

21–22 provides a ligand contact to glutathione; it reads QS.

This sequence belongs to the GST superfamily. Alpha family. As to quaternary structure, homodimer. In terms of processing, the N-terminus is blocked.

The protein localises to the cytoplasm. The catalysed reaction is RX + glutathione = an S-substituted glutathione + a halide anion + H(+). Functionally, conjugation of reduced glutathione to a wide number of exogenous and endogenous hydrophobic electrophiles. In Dicentrarchus labrax (European seabass), this protein is Glutathione S-transferase 8.2.